The chain runs to 88 residues: Probable Fe(2+)-trafficking protein (88 aa).

The protein belongs to the Fe(2+)-trafficking protein family.

Could be a mediator in iron transactions between iron acquisition and iron-requiring processes, such as synthesis and/or repair of Fe-S clusters in biosynthetic enzymes. In Teredinibacter turnerae (strain ATCC 39867 / T7901), this protein is Probable Fe(2+)-trafficking protein.